The following is a 404-amino-acid chain: Multidrug resistance protein MdtG (404 aa).

11 helical membrane passes run 19–39 (LGCF…PLYV), 56–76 (LVFS…GGLA), 90–110 (LGMA…QFLI), 113–133 (ALLG…ATQV), 144–164 (TLST…GLLA), 171–191 (PVFF…FFFI), 222–242 (LFVT…ILTL), 254–274 (IAFI…LSAP), 288–308 (ILIV…FVQT), 317–337 (FLLG…LVYN), and 376–396 (AVFC…WNSL).

Belongs to the major facilitator superfamily. DHA1 family. MdtG (TC 2.A.1.2.20) subfamily.

The protein localises to the cell inner membrane. The polypeptide is Multidrug resistance protein MdtG (Salmonella typhi).